The following is a 362-amino-acid chain: DNA replication and repair protein RecF (362 aa).

30–37 contacts ATP; it reads GPNGSGKT.

Belongs to the RecF family.

The protein resides in the cytoplasm. In terms of biological role, the RecF protein is involved in DNA metabolism; it is required for DNA replication and normal SOS inducibility. RecF binds preferentially to single-stranded, linear DNA. It also seems to bind ATP. The chain is DNA replication and repair protein RecF from Proteus mirabilis (strain HI4320).